The primary structure comprises 576 residues: Urease subunit alpha (576 aa).

A Urease domain is found at 132 to 576 (GGVDTHIHFI…LPMAQRYFLF (445 aa)). Positions 137, 139, and 220 each coordinate Ni(2+). At Lys-220 the chain carries N6-carboxylysine. A substrate-binding site is contributed by His-222. Positions 249 and 275 each coordinate Ni(2+). His-323 serves as the catalytic Proton donor. Asp-363 is a binding site for Ni(2+).

The protein belongs to the metallo-dependent hydrolases superfamily. Urease alpha subunit family. Heterotrimer of UreA (gamma), UreB (beta) and UreC (alpha) subunits. Three heterotrimers associate to form the active enzyme. Ni cation is required as a cofactor. Post-translationally, carboxylation allows a single lysine to coordinate two nickel ions.

The protein resides in the cytoplasm. It catalyses the reaction urea + 2 H2O + H(+) = hydrogencarbonate + 2 NH4(+). It functions in the pathway nitrogen metabolism; urea degradation; CO(2) and NH(3) from urea (urease route): step 1/1. The polypeptide is Urease subunit alpha (Arthrobacter sp. (strain FB24)).